The sequence spans 401 residues: Carbamoyl phosphate synthase small chain (401 aa).

Residues 1–203 form a CPSase region; it reads MTETAPWTTR…KGYGTLGEAD (203 aa). Residues Ser-56, Gly-255, and Gly-257 each coordinate L-glutamine. The region spanning 207-395 is the Glutamine amidotransferase type-1 domain; that stretch reads HVVCVDFGVK…VNLLRENKGE (189 aa). Cys-284 (nucleophile) is an active-site residue. 5 residues coordinate L-glutamine: Leu-285, Gln-288, Asn-326, Gly-328, and Phe-329. Residues His-368 and Glu-370 contribute to the active site.

The protein belongs to the CarA family. In terms of assembly, composed of two chains; the small (or glutamine) chain promotes the hydrolysis of glutamine to ammonia, which is used by the large (or ammonia) chain to synthesize carbamoyl phosphate. Tetramer of heterodimers (alpha,beta)4.

It carries out the reaction hydrogencarbonate + L-glutamine + 2 ATP + H2O = carbamoyl phosphate + L-glutamate + 2 ADP + phosphate + 2 H(+). It catalyses the reaction L-glutamine + H2O = L-glutamate + NH4(+). Its pathway is amino-acid biosynthesis; L-arginine biosynthesis; carbamoyl phosphate from bicarbonate: step 1/1. The protein operates within pyrimidine metabolism; UMP biosynthesis via de novo pathway; (S)-dihydroorotate from bicarbonate: step 1/3. Functionally, small subunit of the glutamine-dependent carbamoyl phosphate synthetase (CPSase). CPSase catalyzes the formation of carbamoyl phosphate from the ammonia moiety of glutamine, carbonate, and phosphate donated by ATP, constituting the first step of 2 biosynthetic pathways, one leading to arginine and/or urea and the other to pyrimidine nucleotides. The small subunit (glutamine amidotransferase) binds and cleaves glutamine to supply the large subunit with the substrate ammonia. In Agrobacterium fabrum (strain C58 / ATCC 33970) (Agrobacterium tumefaciens (strain C58)), this protein is Carbamoyl phosphate synthase small chain.